A 217-amino-acid chain; its full sequence is LexA repressor (217 aa).

The H-T-H motif DNA-binding region spans 28-48; the sequence is RAEIAAEFGFSSPNAAEEHLR. Residues Ser-136 and Lys-173 each act as for autocatalytic cleavage activity in the active site.

The protein belongs to the peptidase S24 family. In terms of assembly, homodimer.

It catalyses the reaction Hydrolysis of Ala-|-Gly bond in repressor LexA.. In terms of biological role, represses a number of genes involved in the response to DNA damage (SOS response), including recA and lexA. In the presence of single-stranded DNA, RecA interacts with LexA causing an autocatalytic cleavage which disrupts the DNA-binding part of LexA, leading to derepression of the SOS regulon and eventually DNA repair. The protein is LexA repressor of Cupriavidus taiwanensis (strain DSM 17343 / BCRC 17206 / CCUG 44338 / CIP 107171 / LMG 19424 / R1) (Ralstonia taiwanensis (strain LMG 19424)).